Consider the following 1169-residue polypeptide: MGRRCCVANCPSTSRLLEHNGVTYHSFPLDPIIRAIWIKNSRISLERQITKSVLVCSRHFRRLDFNTIRNGKYLLKPRVFPTVFPWGKMDTAEIEADQRALQHASVEGTTETPGNAQSSTNDDVIKATVDQIVAQILSESAERKATEEGKTGKAADDVKNTPESGEDANKAAAKEPSGTPVAASSEATVPAPGSASSSNSPLPGTPPKYSNPHNLTIGARLEALSVEGNWLPARIVEVNETEQTLLVRFERNHKLKVSPSTSGSFQEWMAIKSERLRQRLSNRVLPVFELDEKCMARWSGPRKFPGTIRKLLGNDTYEVLFDDGYVKNVRAVHMNKMPKQLPPVQVAEEGASKSPTPVGTPVSSAPVAPKRASTGSLGGSSGSSGSKKSKCAPQRRDWPLLDMASLDIASLGLPEIPHDGEWTCHWVNDQPIGTEGFLIVGEHQKPTVIVQDWRLPPGWIKHMYQRSNVLGKWDVILVSPSGKRFRSKSDLKLFLESQNLVYNPDVYDFSIHRRRAKDINAYVYTHGYNPQPPPKPRPMDVSMNSTLDQSITSQHSLPSTPMPVKESQYMEAPVASLMPPAELMSPQTQPADETKPKIEAEILEASEGGTSQLMLADPHVVENGFAFIGGLKVKIQDNLYVCPREDCAKTYRKEDFLLIHIRHYHKEFAEHVSHCPKMQELAVKRTHPSSIDQVEAVPKNQIPNQQFFAKMHQQDLQQSRSFKRQSVSATATSSTPSDITPTKALLSPKMEPPSVSPTVESGIKQEDVSLDAGPTQSFNPSLSRSCKRARLSPSKRPSGSRKSNRQRSQRRPILSDNPAGHGLTEQDVEETRQSFNTPTPDTRIDSKKRRSGAATTPISSIDSPAMGDSVSTPSSNDQTDINAALAPPPAETLSKAPQYIKENGELIRIVRMRQEEIINCICEYGEEDGLMIQCELCLCWQHGACNGIVKEADVPDKYVCYICRNPQRGRDSMRFKHDQDWLFEGKLPVAAYHTANPQATKQFELLKRSHTLTGNLLDAKRSMHSLLVKINIARNRCHPKLYLWAKKWDEDNLDSTALTPVKRAKLEAPDLPNVPQPEAAIDPEECQYRLIEHIKVQQSLVLDRLNDIEAEMDELEKEDTLDDLKDADISTTKEALATFIKELETMKRLAKLNQVANMKQTLRDSATSK.

Residues 5-59 (CCVANCPSTSRLLEHNGVTYHSFPLDPIIRAIWIKNSRISLERQITKSVLVCSRH) form a THAP-type zinc finger. Disordered stretches follow at residues 99–122 (RALQ…STND), 140–211 (SAER…KYSN), and 347–394 (AEEG…CAPQ). Residues 107 to 122 (EGTTETPGNAQSSTND) show a composition bias toward polar residues. Over residues 140-160 (SAERKATEEGKTGKAADDVKN) the composition is skewed to basic and acidic residues. A compositionally biased stretch (low complexity) spans 190–202 (PAPGSASSSNSPL). Polar residues predominate over residues 353–363 (KSPTPVGTPVS). An MBD domain is found at 445-514 (KPTVIVQDWR…DVYDFSIHRR (70 aa)). The segment at 527-565 (GYNPQPPPKPRPMDVSMNSTLDQSITSQHSLPSTPMPVK) is disordered. Residues 542 to 559 (SMNSTLDQSITSQHSLPS) are compositionally biased toward polar residues. Residues 640 to 665 (YVCPREDCAKTYRKEDFLLIHIRHYH) form a C2H2-type zinc finger. The interval 714 to 890 (QDLQQSRSFK…INAALAPPPA (177 aa)) is disordered. The span at 726–742 (SVSATATSSTPSDITPT) shows a compositional bias: low complexity. The span at 774–784 (PTQSFNPSLSR) shows a compositional bias: polar residues. A compositionally biased stretch (basic residues) spans 798–810 (SGSRKSNRQRSQR). Composition is skewed to polar residues over residues 853-862 (AATTPISSID) and 869-881 (SVST…QTDI).

As to quaternary structure, component of the non-specific lethal (NLS) histone acetyltransferase complex at least composed of mof, nls1, dgt1/NSL2, Rcd1/NSL3, Rcd5/MCRS2, MBD-R2 and wds.

It is found in the nucleus. The protein resides in the chromosome. Component of the non-specific lethal (NLS) complex, a multiprotein complex that promotes expression of housekeeping genes on X chromosome and autosomes. The polypeptide is Protein MBD-R2 (Drosophila melanogaster (Fruit fly)).